A 455-amino-acid polypeptide reads, in one-letter code: Catalase-like protein (455 aa).

The interval 1 to 25 (MSQQDKKLTGVFGHPVSDRENSMTA) is disordered.

The protein belongs to the catalase family.

Its function is as follows. Catalytically inactive. The polypeptide is Catalase-like protein (katB) (Staphylococcus aureus).